Consider the following 329-residue polypeptide: GTP 3',8-cyclase (329 aa).

A Radical SAM core domain is found at 8-234 (AFARKFYYLR…QLRQRSDGPA (227 aa)). Arg17 provides a ligand contact to GTP. Residues Cys24 and Cys28 each contribute to the [4Fe-4S] cluster site. Tyr30 provides a ligand contact to S-adenosyl-L-methionine. Residue Cys31 coordinates [4Fe-4S] cluster. Arg68 serves as a coordination point for GTP. Gly72 contacts S-adenosyl-L-methionine. A GTP-binding site is contributed by Thr99. Ser123 contacts S-adenosyl-L-methionine. GTP is bound at residue Lys160. Met194 is a binding site for S-adenosyl-L-methionine. Residues Cys257 and Cys260 each contribute to the [4Fe-4S] cluster site. Position 262–264 (262–264 (RLR)) interacts with GTP. Cys274 contributes to the [4Fe-4S] cluster binding site.

Belongs to the radical SAM superfamily. MoaA family. In terms of assembly, monomer and homodimer. [4Fe-4S] cluster serves as cofactor.

The catalysed reaction is GTP + AH2 + S-adenosyl-L-methionine = (8S)-3',8-cyclo-7,8-dihydroguanosine 5'-triphosphate + 5'-deoxyadenosine + L-methionine + A + H(+). It participates in cofactor biosynthesis; molybdopterin biosynthesis. Catalyzes the cyclization of GTP to (8S)-3',8-cyclo-7,8-dihydroguanosine 5'-triphosphate. The protein is GTP 3',8-cyclase of Shigella dysenteriae serotype 1 (strain Sd197).